Consider the following 408-residue polypeptide: Aminoacylase-1 (408 aa).

Residue histidine 80 coordinates Zn(2+). The active site involves aspartate 82. Aspartate 113 provides a ligand contact to Zn(2+). Glutamate 147 serves as the catalytic Proton acceptor. Zn(2+)-binding residues include glutamate 148, glutamate 175, and histidine 373.

This sequence belongs to the peptidase M20A family. In terms of assembly, homodimer. Interacts with SPHK1. Requires Zn(2+) as cofactor. In terms of tissue distribution, expression is highest in kidney, strong in brain and weaker in placenta and spleen.

Its subcellular location is the cytoplasm. The catalysed reaction is an N-acyl-L-amino acid + H2O = an L-alpha-amino acid + a carboxylate. It carries out the reaction N-acetyl-L-methionine + H2O = L-methionine + acetate. The enzyme catalyses N-acetyl-L-glutamine + H2O = L-glutamine + acetate. Its function is as follows. Catalyzes the hydrolysis of N-acetylated amino acids to acetate and free amino acids. The chain is Aminoacylase-1 (ACY1) from Homo sapiens (Human).